The primary structure comprises 830 residues: P-selectin (830 aa).

Residues 1–41 (MANCQIAILYQRFQRVVFGISQLLCFSALISELTNQKEVAA) form the signal peptide. The Extracellular portion of the chain corresponds to 42–771 (WTYHYSTKAY…QAGPLTIQEA (730 aa)). N-linked (GlcNAc...) asparagine glycans are attached at residues Asn-54 and Asn-98. A C-type lectin domain is found at 58–158 (KYCQNRYTDL…HCLKKKHALC (101 aa)). Disulfide bonds link Cys-60–Cys-158, Cys-131–Cys-150, Cys-163–Cys-174, Cys-168–Cys-183, Cys-185–Cys-194, Cys-200–Cys-244, Cys-230–Cys-257, Cys-262–Cys-306, Cys-292–Cys-319, Cys-324–Cys-368, Cys-354–Cys-381, Cys-386–Cys-430, Cys-416–Cys-443, Cys-448–Cys-492, Cys-478–Cys-505, Cys-510–Cys-554, Cys-540–Cys-567, Cys-572–Cys-616, Cys-602–Cys-629, Cys-642–Cys-686, Cys-672–Cys-699, Cys-704–Cys-748, and Cys-734–Cys-761. Ca(2+) is bound by residues Glu-121, Asn-123, and Asn-124. A carbohydrate is bound at residue Asn-123. 2 residues coordinate a carbohydrate: Glu-133 and Asn-146. Asn-146 and Asp-147 together coordinate Ca(2+). In terms of domain architecture, EGF-like spans 159 to 195 (YTASCQDMSCSKQGECLETIGNYTCSCYPGFYGPECE). A glycan (N-linked (GlcNAc...) asparagine) is linked at Asn-180. Sushi domains lie at 198–259 (RECG…QCLA), 260–321 (AQCP…VCKA), 322–383 (VQCQ…TCEA), 384–445 (ISCE…VCQA), 446–507 (LQCQ…ECQA), 508–569 (IPCT…MCEA), 570–631 (IKCP…TCKG), 640–701 (VQCP…ACRA), and 702–763 (VKCS…TCQA). N-linked (GlcNAc...) asparagine glycans are attached at residues Asn-212 and Asn-219. N-linked (GlcNAc...) asparagine glycosylation occurs at Asn-411. An N-linked (GlcNAc...) asparagine glycan is attached at Asn-460. N-linked (GlcNAc...) asparagine glycosylation occurs at Asn-518. Asn-665 carries N-linked (GlcNAc...) asparagine glycosylation. N-linked (GlcNAc...) asparagine glycosylation is found at Asn-716, Asn-723, and Asn-741. Residues 772–795 (LTYFGGAVASTIGLIMGGTLLALL) form a helical membrane-spanning segment. At 796–830 (RKRFRQKDDGKCPLNPHSHLGTYGVFTNAAFDPSP) the chain is on the cytoplasmic side. A lipid anchor (S-palmitoyl cysteine; alternate) is attached at Cys-807. The S-stearoyl cysteine; alternate moiety is linked to residue Cys-807. The short motif at 818 to 821 (YGVF) is the Endocytosis signal element. The interaction with SNX17 stretch occupies residues 821–830 (FTNAAFDPSP).

It belongs to the selectin/LECAM family. Interacts with SNX17. Interacts with SELPLG/PSGL1 and PODXL2 and mediates neutrophil adhesion and leukocyte rolling. This interaction requires the sialyl-Lewis X epitope of SELPLG and PODXL2, and specific tyrosine sulfation on SELPLG. Interacts (via C-type lectin domain) with alpha-IIb/beta3 integrin ITGA2B:ITGB3 and alpha-V/beta-3 integrin ITGAV:ITGB3. Interacts with alpha5/beta1 integrin ITGA5:ITGB1 and alpha4/beta1 integrin ITGA4:ITGB. As to expression, stored in the alpha-granules of platelets and Weibel-Palade bodies of endothelial cells. Upon cell activation by agonists, P-selectin is transported rapidly to the cell surface.

Its subcellular location is the cell membrane. Its function is as follows. Ca(2+)-dependent receptor for myeloid cells that binds to carbohydrates on neutrophils and monocytes. Mediates the interaction of activated endothelial cells or platelets with leukocytes. The ligand recognized is sialyl-Lewis X. Mediates rapid rolling of leukocyte rolling over vascular surfaces during the initial steps in inflammation through interaction with SELPLG. Mediates cell-cell interactions and cell adhesion via the interaction with integrin alpha-IIb/beta3 (ITGA2B:ITGB3) and integrin alpha-V/beta-3 (ITGAV:ITGB3). In Homo sapiens (Human), this protein is P-selectin (SELP).